A 193-amino-acid polypeptide reads, in one-letter code: dTTP/UTP pyrophosphatase (193 aa).

Catalysis depends on aspartate 71, which acts as the Proton acceptor.

This sequence belongs to the Maf family. YhdE subfamily. It depends on a divalent metal cation as a cofactor.

It is found in the cytoplasm. The enzyme catalyses dTTP + H2O = dTMP + diphosphate + H(+). It carries out the reaction UTP + H2O = UMP + diphosphate + H(+). Nucleoside triphosphate pyrophosphatase that hydrolyzes dTTP and UTP. May have a dual role in cell division arrest and in preventing the incorporation of modified nucleotides into cellular nucleic acids. This is dTTP/UTP pyrophosphatase from Dictyoglomus turgidum (strain DSM 6724 / Z-1310).